The chain runs to 265 residues: Mlc titration factor A (265 aa).

4 residues coordinate Zn(2+): His111, His148, His152, and Glu211.

It belongs to the MtfA family. Interacts with Mlc. The cofactor is Zn(2+).

It is found in the cytoplasm. Involved in the modulation of the activity of the glucose-phosphotransferase system (glucose-PTS). Interacts with the transcriptional repressor Mlc, preventing its interaction with DNA and leading to the modulation of expression of genes regulated by Mlc, including ptsG, which encodes the PTS system glucose-specific EIICB component. In terms of biological role, shows zinc-dependent metallopeptidase activity. The sequence is that of Mlc titration factor A from Salmonella typhi.